A 620-amino-acid chain; its full sequence is Mitochondrial Rho GTPase 2 (620 aa).

Residues 1–594 are Cytoplasmic-facing; the sequence is MKRDVRILLL…ELHTTSFWLR (594 aa). The region spanning 2–168 is the Miro 1 domain; it reads KRDVRILLLG…FYYAQKAVLH (167 aa). GTP is bound by residues glycine 16, lysine 17, threonine 18, and serine 19. Threonine 18 provides a ligand contact to Mg(2+). 2 residues coordinate Mg(2+): proline 35 and aspartate 57. Residue serine 59 participates in GTP binding. Lysine 96 is covalently cross-linked (Glycyl lysine isopeptide (Lys-Gly) (interchain with G-Cter in ubiquitin)). GTP is bound by residues asparagine 118, lysine 119, aspartate 121, alanine 149, and lysine 150. A Glycyl lysine isopeptide (Lys-Gly) (interchain with G-Cter in ubiquitin) cross-link involves residue lysine 119. Residue lysine 164 forms a Glycyl lysine isopeptide (Lys-Gly) (interchain with G-Cter in ubiquitin) linkage. 2 EF-hand domains span residues 184–219 and 304–339; these read ACAQ…CFGH and HGYQ…FPGP. The Ca(2+) site is built by aspartate 197, aspartate 199, aspartate 201, glutamate 208, aspartate 317, aspartate 319, aspartate 321, and glutamate 328. The interval 340–364 is disordered; sequence PWGPQLPRHRPHRGRSAAPARVPLP. The Miro 2 domain occupies 415–578; the sequence is RNVLLCKVLG…FARLATMATF (164 aa). GTP is bound by residues glycine 427, glycine 429, lysine 430, and serine 431. Mg(2+) is bound by residues serine 431 and glutamate 473. GTP is bound by residues lysine 527, aspartate 529, and cysteine 558. Residues 595–617 form a helical; Anchor for type IV membrane protein membrane-spanning segment; that stretch reads VALGAVGAAVAAILSFSLYRVLV. Residues 618-620 lie on the Mitochondrial intermembrane side of the membrane; it reads KSR.

It belongs to the mitochondrial Rho GTPase family. As to quaternary structure, homodimer. Interacts with the kinesin-binding proteins TRAK1/OIP106 and TRAK2/GRIF1, forming a link between mitochondria and the trafficking apparatus of the microtubules. Interacts with ARMCX3. Found in a complex with KIF5B, OGT, RHOT1 and TRAK1. In terms of processing, ubiquitinated by PRKN in a PINK1-dependent manner, leading to its degradation.

The protein resides in the mitochondrion outer membrane. It carries out the reaction GTP + H2O = GDP + phosphate + H(+). It catalyses the reaction ATP + H2O = ADP + phosphate + H(+). The enzyme catalyses UTP + H2O = UDP + phosphate + H(+). Functionally, atypical mitochondrial nucleoside-triphosphatase (NTPase) involved in mitochondrial trafficking. Probably involved in control of anterograde transport of mitochondria and their subcellular distribution. Can hydrolyze GTP, ATP and UTP. This is Mitochondrial Rho GTPase 2 (RHOT2) from Sus scrofa (Pig).